Reading from the N-terminus, the 982-residue chain is Glutamate [NMDA] receptor subunit 1 (982 aa).

Residues 1 to 22 form the signal peptide; that stretch reads MRVAFIYRWLLCGAAIVNVLVA. Over 23 to 568 the chain is Extracellular; sequence QRHTASDNPS…TLVSFLQPFS (546 aa). N-linked (GlcNAc...) asparagine glycosylation is found at N253, N309, N340, N392, N449, N476, and N496. Glycine-binding positions include 525-527 and R532; that span reads PLT. Residues 569–589 traverse the membrane as a helical segment; sequence NTLWILVMVSVHVVALVLYLL. Residues 590 to 646 lie on the Cytoplasmic side of the membrane; sequence DRFSPFGRFKLSHSDSNEEKALNLSSAVWFAWGVLLNSGIGEGTPRSFSARVLGMVW. Residues 647–667 form a helical membrane-spanning segment; sequence AGFAMIIVASYTANLAAFLVL. At 668–826 the chain is on the extracellular side; it reads ERPKTKLSGI…KTPNTLGLKN (159 aa). N688 carries N-linked (GlcNAc...) asparagine glycosylation. S698 and D742 together coordinate glycine. A helical membrane pass occupies residues 827-847; it reads MAGVFILVGVGIAGGVGLIII. Residues 848-982 lie on the Cytoplasmic side of the membrane; that stretch reads EVIYKKHQVK…YTSDVSHLVV (135 aa). The interval 948 to 982 is disordered; the sequence is LTASQLGLGKTRPQQNPLPPRYSPGYTSDVSHLVV. Residues 972–982 show a composition bias toward polar residues; that stretch reads GYTSDVSHLVV.

Belongs to the glutamate-gated ion channel (TC 1.A.10.1) family. As to quaternary structure, forms a heteromeric NMDA channel with Nmdar2.

Its subcellular location is the cell membrane. It localises to the postsynaptic cell membrane. The protein resides in the postsynaptic density. NMDA receptor subtype of glutamate-gated ion channels with high calcium permeability and voltage-dependent sensitivity to magnesium. Mediated by glycine. This protein plays a key role in synaptic plasticity, synaptogenesis, excitotoxicity, memory acquisition and learning. It mediates neuronal functions in glutamate neurotransmission. Is involved in the cell surface targeting of NMDA receptors. Plays a role in associative learning and in long-term memory consolidation. The chain is Glutamate [NMDA] receptor subunit 1 from Drosophila grimshawi (Hawaiian fruit fly).